Reading from the N-terminus, the 130-residue chain is Small ribosomal subunit protein uS8A (130 aa).

The protein belongs to the universal ribosomal protein uS8 family. In terms of assembly, component of the small ribosomal subunit (SSU). Mature yeast ribosomes consist of a small (40S) and a large (60S) subunit. The 40S small subunit contains 1 molecule of ribosomal RNA (18S rRNA) and 33 different proteins (encoded by 57 genes). The large 60S subunit contains 3 rRNA molecules (25S, 5.8S and 5S rRNA) and 46 different proteins (encoded by 81 genes).

It is found in the cytoplasm. Its function is as follows. Component of the ribosome, a large ribonucleoprotein complex responsible for the synthesis of proteins in the cell. The small ribosomal subunit (SSU) binds messenger RNAs (mRNAs) and translates the encoded message by selecting cognate aminoacyl-transfer RNA (tRNA) molecules. The large subunit (LSU) contains the ribosomal catalytic site termed the peptidyl transferase center (PTC), which catalyzes the formation of peptide bonds, thereby polymerizing the amino acids delivered by tRNAs into a polypeptide chain. The nascent polypeptides leave the ribosome through a tunnel in the LSU and interact with protein factors that function in enzymatic processing, targeting, and the membrane insertion of nascent chains at the exit of the ribosomal tunnel. This chain is Small ribosomal subunit protein uS8A, found in Saccharomyces cerevisiae (strain ATCC 204508 / S288c) (Baker's yeast).